Here is a 622-residue protein sequence, read N- to C-terminus: Chaperone protein HscA homolog (622 aa).

It belongs to the heat shock protein 70 family.

In terms of biological role, chaperone involved in the maturation of iron-sulfur cluster-containing proteins. Has a low intrinsic ATPase activity which is markedly stimulated by HscB. In Burkholderia mallei (strain NCTC 10247), this protein is Chaperone protein HscA homolog.